The chain runs to 254 residues: Leucyl/phenylalanyl-tRNA--protein transferase (254 aa).

The protein belongs to the L/F-transferase family.

The protein localises to the cytoplasm. The enzyme catalyses N-terminal L-lysyl-[protein] + L-leucyl-tRNA(Leu) = N-terminal L-leucyl-L-lysyl-[protein] + tRNA(Leu) + H(+). The catalysed reaction is N-terminal L-arginyl-[protein] + L-leucyl-tRNA(Leu) = N-terminal L-leucyl-L-arginyl-[protein] + tRNA(Leu) + H(+). It catalyses the reaction L-phenylalanyl-tRNA(Phe) + an N-terminal L-alpha-aminoacyl-[protein] = an N-terminal L-phenylalanyl-L-alpha-aminoacyl-[protein] + tRNA(Phe). Functionally, functions in the N-end rule pathway of protein degradation where it conjugates Leu, Phe and, less efficiently, Met from aminoacyl-tRNAs to the N-termini of proteins containing an N-terminal arginine or lysine. This Burkholderia orbicola (strain MC0-3) protein is Leucyl/phenylalanyl-tRNA--protein transferase.